Reading from the N-terminus, the 354-residue chain is Guanine nucleotide-binding protein G(o) subunit alpha (354 aa).

Gly2 carries N-myristoyl glycine lipidation. A lipid anchor (S-palmitoyl cysteine) is attached at Cys3. The 323-residue stretch at 32–354 (KDIKLLLLGA…ANNLRGCGLY (323 aa)) folds into the G-alpha domain. Residues 35–48 (KLLLLGAGESGKST) form a G1 motif region. Residues 40–47 (GAGESGKS), 176–182 (LRTRVKT), 201–205 (DVGGQ), 270–273 (NKKD), and Ala326 each bind GTP. Ser47 and Thr182 together coordinate Mg(2+). Residues 174–182 (DILRTRVKT) form a G2 motif region. Residues 197–206 (FKLFDVGGQR) are G3 motif. The tract at residues 266 to 273 (ILFLNKKD) is G4 motif. A G5 motif region spans residues 324-329 (TCATDT).

The protein belongs to the G-alpha family. G(i/o/t/z) subfamily. In terms of assembly, g proteins are composed of 3 units; alpha, beta and gamma. The alpha chain contains the guanine nucleotide binding site.

Guanine nucleotide-binding proteins (G proteins) are involved as modulators or transducers in various transmembrane signaling systems. The G(o) protein function is not clear. The protein is Guanine nucleotide-binding protein G(o) subunit alpha of Planorbella trivolvis (Marsh rams-horn).